The sequence spans 124 residues: Ragulator complex protein LAMTOR2 homolog (124 aa).

Belongs to the GAMAD family. In terms of assembly, part of the Ragulator complex.

Regulator of the TOR pathway, a signaling cascade that promotes cell growth in response to growth factors, energy levels, and amino acids. May activate the TOR signaling cascade in response to amino acids. In Caenorhabditis elegans, this protein is Ragulator complex protein LAMTOR2 homolog.